Here is a 326-residue protein sequence, read N- to C-terminus: Glutaminase 2 (326 aa).

The substrate site is built by Ser-73, Asn-125, Glu-169, Asn-176, Tyr-200, Tyr-252, and Val-270.

Belongs to the glutaminase family. As to quaternary structure, homotetramer.

The enzyme catalyses L-glutamine + H2O = L-glutamate + NH4(+). This Bacillus cereus (strain ATCC 14579 / DSM 31 / CCUG 7414 / JCM 2152 / NBRC 15305 / NCIMB 9373 / NCTC 2599 / NRRL B-3711) protein is Glutaminase 2.